Reading from the N-terminus, the 206-residue chain is High frequency lysogenization protein HflD homolog (206 aa).

This sequence belongs to the HflD family.

Its subcellular location is the cytoplasm. The protein resides in the cell inner membrane. The protein is High frequency lysogenization protein HflD homolog of Marinobacter nauticus (strain ATCC 700491 / DSM 11845 / VT8) (Marinobacter aquaeolei).